Consider the following 33-residue polypeptide: Mu-theraphotoxin-Tp1a (33 aa).

Intrachain disulfides connect cysteine 2–cysteine 17, cysteine 9–cysteine 22, and cysteine 16–cysteine 29. An Isoleucine amide modification is found at isoleucine 33.

It belongs to the neurotoxin 10 (Hwtx-1) family. 55 (ProTx-III) subfamily. Expressed by the venom gland.

The protein localises to the secreted. Its function is as follows. Inhibits voltage-gated sodium channels without significantly altering the voltage dependence of activation or inactivation. Preferentially inhibits human Nav1.7/SCN9A (IC(50)=2.1 nM) &gt; human Nav1.6/SCN8A &gt; human Nav1.2/SCN2A &gt; human Nav1.1/SCN1A &gt; human Nav1.3/SCN3A channels. Exhibits analgesic properties by reversing spontaneous pain induced in mice by intraplantar injection with OD1 (AC P84646), a scorpion toxin that potentiates human Nav1.7/SCN9A. This is Mu-theraphotoxin-Tp1a from Thrixopelma pruriens (Peruvian green velvet tarantula).